Consider the following 259-residue polypeptide: Pycsar effector protein RsmPycTIR (259 aa).

1–120 (MVGGDEVIAN…RRVHEDFSGR (120 aa)) serves as a coordination point for a nucleoside 3',5'-cyclic phosphate. The TIR-like stretch occupies residues 126–229 (LATGISRRTS…AEFQYQISSS (104 aa)). The next 3 helical transmembrane spans lie at 136–156 (GWNW…AIWY), 169–189 (VLLP…ADPV), and 234–254 (QATA…LFWI).

Its subcellular location is the cell inner membrane. It catalyses the reaction NAD(+) + H2O = ADP-D-ribose + nicotinamide + H(+). Its function is as follows. Pycsar (pyrimidine cyclase system for antiphage resistance) provides immunity against bacteriophage. The pyrimidine cyclase (PycC) synthesizes cyclic nucleotides in response to infection; these serve as specific second messenger signals. The signals activate the adjacent effector, leading to bacterial cell death and abortive phage infection. A clade B Pycsar system. In terms of biological role, the effector gene of a two-gene Pycsar system. Expression of this and adjacent uridylate cyclase RsmPycC (AC A0A1V0HUX5) probably confers resistance to bacteriophage. The genes are probably only expressed in response to bacteriophage infection. Probably only responds to cUMP (produced by its cognate NTP cyclase), it may act by degrading NAD(+) and/or by impairing membrane integrity. The chain is Pycsar effector protein RsmPycTIR from Rhodovulum sp. (strain MB263).